The sequence spans 943 residues: Lactoferrin-binding protein A (943 aa).

Positions 1–27 (MNKKHGFPLTLTALAIATAFPAYAAQA) are cleaved as a signal peptide. The region spanning 52-178 (RRSKEATGLG…LGGAVAFRTK (127 aa)) is the TBDR plug domain. The TBDR beta-barrel domain occupies 189 to 943 (SWGIQAKTAY…NFSLALEMKF (755 aa)). The short motif at 926–943 (GRYAAPGRNFSLALEMKF) is the TonB C-terminal box element.

This sequence belongs to the TonB-dependent receptor family.

Its subcellular location is the cell outer membrane. In terms of biological role, unknown. May be an iron-siderophore receptor. This Neisseria meningitidis serogroup B (strain ATCC BAA-335 / MC58) protein is Lactoferrin-binding protein A (lbpA).